We begin with the raw amino-acid sequence, 138 residues long: Phospholipase A2 homolog crotoxin acid subunit CA (138 aa).

The first 37 residues, methionine 1–tyrosine 37, serve as a signal peptide directing secretion. 8 cysteine pairs are disulfide-bonded: cysteine 42–cysteine 131, cysteine 44–cysteine 60, cysteine 59–cysteine 111, cysteine 65–cysteine 138, cysteine 66–cysteine 104, cysteine 73–cysteine 97, cysteine 91–cysteine 102, and cysteine 131–cysteine 138. The propeptide occupies valine 79–tyrosine 82. Glutamine 84 bears the Pyrrolidone carboxylic acid mark. Positions tyrosine 119–leucine 124 are excised as a propeptide. Glutamine 125 is modified (pyrrolidone carboxylic acid).

This sequence belongs to the phospholipase A2 family. Group II subfamily. D49 sub-subfamily. Heterodimer of one of the acidic (CA1, CA2, CA3 or CA4) and one of the basic (CBa1, CBa2, CBb, CBc or CBd) subunits; non-covalently linked. The acidic subunit is non-toxic, without enzymatic activity and comprises 3 peptides that are cross-linked by 5 disulfide bridges. The basic subunit is toxic, has phospholipase A2 activity and is composed of a single chain. Multiple variants of each subunit give different crotoxin complexes that can be subdivided into 2 classes: (1) those of high toxicity, low PLA2 activity (CBb, CBc and CBd linked with high affinity to any CA) and high stability (K(d)=4.5 nM) and (2) those of moderate toxicity, high PLA2 activity (CBa2 linked with low affinity to any CA) and low stability (K(d)=25 nM). Expressed by the venom gland.

Its subcellular location is the secreted. In terms of biological role, CAalpha-CAbeta-CAgamma: The acidic subunit of crotoxin (CA) is a heterotrimer of three disulfide-linked chains generated by post-translational maturation of a PLA2-like precursor. CA has no PLA2 activity and is not neurotoxic by itself, but plays several important functions in the crotoxin complex by increasing the lethal potency of the uncomplexed CB subunit. It acts by physically occluding the hydrophobic interfacial binding surface (IBS) of CB. This effect decreases the adsorption of CB to phospholipid membranes, targeting the crotoxin complex to reach the specific presynaptic receptor (R48) at the neuromuscular junction. It also prevents the formation of the reactive CB dimer. Moreover, the CA subunit inhibits the catalytic activity by partially masking the catalytic site of CB and inhibits its anticoagulant activity. Heterodimer CA-CB: Crotoxin is a potent presynaptic neurotoxin that possesses phospholipase A2 (PLA2) activity and exerts a lethal action by blocking neuromuscular transmission. It consists of a non-covalent association of a basic and weakly toxic PLA2 subunit (CBa2, CBb, CBc, or CBd), with a small acidic, non-enzymatic and non-toxic subunit (CA1, CA2, CA3 or CA4). The complex acts by binding to a specific 48-kDa protein (R48/CAPT) receptor located on presynaptic membranes, forming a transient ternary complex CA-CB-R48, followed by dissociation of the CA-CB complex and release of the CA subunit. At equilibrium, only the CB subunits remain associated with the specific crotoxin receptor. In addition to neurotoxicity, crotoxin has been found to exert myotoxicity, nephrotoxicity, and cardiovascular toxicity. Moreover, anti-inflammatory, immunomodulatory, anti-tumor and analgesic effects of crotoxin have also been reported. Functionally, found in the venom as a monomer and stabilized by one disulfide bond (Cys-131 and Cys-138). This peptide induces potent antinociceptive effects in acute and chronic pain models. This effect is mediated by the release of peripheral dynorphin A, an endogenous agonist of kappa-opioid receptors, and this release is dependent on cannabinoid receptor CB2 activation. The sequence is that of Phospholipase A2 homolog crotoxin acid subunit CA from Crotalus durissus terrificus (South American rattlesnake).